The sequence spans 89 residues: Elongation factor 1-beta (89 aa).

Belongs to the EF-1-beta/EF-1-delta family.

Functionally, promotes the exchange of GDP for GTP in EF-1-alpha/GDP, thus allowing the regeneration of EF-1-alpha/GTP that could then be used to form the ternary complex EF-1-alpha/GTP/AAtRNA. This is Elongation factor 1-beta from Methanococcus maripaludis (strain C6 / ATCC BAA-1332).